Reading from the N-terminus, the 667-residue chain is DNA ligase (667 aa).

NAD(+) contacts are provided by residues aspartate 32 to aspartate 36, serine 81 to leucine 82, and glutamate 110. The N6-AMP-lysine intermediate role is filled by lysine 112. The NAD(+) site is built by arginine 133, glutamate 167, lysine 283, and lysine 307. Cysteine 401, cysteine 404, cysteine 419, and cysteine 424 together coordinate Zn(2+). Residues glutamate 586–serine 667 enclose the BRCT domain.

The protein belongs to the NAD-dependent DNA ligase family. LigA subfamily. Mg(2+) is required as a cofactor. Requires Mn(2+) as cofactor.

It carries out the reaction NAD(+) + (deoxyribonucleotide)n-3'-hydroxyl + 5'-phospho-(deoxyribonucleotide)m = (deoxyribonucleotide)n+m + AMP + beta-nicotinamide D-nucleotide.. Functionally, DNA ligase that catalyzes the formation of phosphodiester linkages between 5'-phosphoryl and 3'-hydroxyl groups in double-stranded DNA using NAD as a coenzyme and as the energy source for the reaction. It is essential for DNA replication and repair of damaged DNA. The polypeptide is DNA ligase (Staphylococcus aureus (strain Mu3 / ATCC 700698)).